Reading from the N-terminus, the 145-residue chain is UPF0735 ACT domain-containing protein CLL_A2896 (145 aa).

The ACT domain maps to 69 to 144; it reads TFNLIVKDQT…YVEKIEFVAM (76 aa).

It belongs to the UPF0735 family.

The chain is UPF0735 ACT domain-containing protein CLL_A2896 from Clostridium botulinum (strain Eklund 17B / Type B).